The sequence spans 427 residues: Enolase (427 aa).

Q163 is a binding site for (2R)-2-phosphoglycerate. E205 functions as the Proton donor in the catalytic mechanism. 3 residues coordinate Mg(2+): D242, E285, and D312. K337, R366, S367, and K388 together coordinate (2R)-2-phosphoglycerate. Catalysis depends on K337, which acts as the Proton acceptor.

The protein belongs to the enolase family. Mg(2+) is required as a cofactor.

It localises to the cytoplasm. The protein localises to the secreted. The protein resides in the cell surface. The catalysed reaction is (2R)-2-phosphoglycerate = phosphoenolpyruvate + H2O. The protein operates within carbohydrate degradation; glycolysis; pyruvate from D-glyceraldehyde 3-phosphate: step 4/5. Functionally, catalyzes the reversible conversion of 2-phosphoglycerate (2-PG) into phosphoenolpyruvate (PEP). It is essential for the degradation of carbohydrates via glycolysis. The protein is Enolase of Burkholderia multivorans (strain ATCC 17616 / 249).